We begin with the raw amino-acid sequence, 178 residues long: Large ribosomal subunit protein uL5 (178 aa).

Belongs to the universal ribosomal protein uL5 family. Part of the 50S ribosomal subunit; part of the 5S rRNA/L5/L18/L25 subcomplex. Contacts the 5S rRNA and the P site tRNA. Forms a bridge to the 30S subunit in the 70S ribosome.

Its function is as follows. This is one of the proteins that bind and probably mediate the attachment of the 5S RNA into the large ribosomal subunit, where it forms part of the central protuberance. In the 70S ribosome it contacts protein S13 of the 30S subunit (bridge B1b), connecting the 2 subunits; this bridge is implicated in subunit movement. Contacts the P site tRNA; the 5S rRNA and some of its associated proteins might help stabilize positioning of ribosome-bound tRNAs. The protein is Large ribosomal subunit protein uL5 of Psychrobacter arcticus (strain DSM 17307 / VKM B-2377 / 273-4).